The primary structure comprises 579 residues: Acetolactate synthase (579 aa).

Glu61 is a thiamine diphosphate binding site. FAD is bound by residues Arg163, 274–295 (HGTA…VGVR), and 317–336 (DIDP…IVGD). The tract at residues 408–487 (QHQMWAGQFV…VKVIILNNGW (80 aa)) is thiamine pyrophosphate binding. Mg(2+) contacts are provided by Asp458 and Asn485.

Belongs to the TPP enzyme family. The cofactor is Mg(2+). Requires thiamine diphosphate as cofactor.

It catalyses the reaction 2 pyruvate + H(+) = (2S)-2-acetolactate + CO2. It participates in amino-acid biosynthesis; L-isoleucine biosynthesis; L-isoleucine from 2-oxobutanoate: step 1/4. It functions in the pathway amino-acid biosynthesis; L-valine biosynthesis; L-valine from pyruvate: step 1/4. The sequence is that of Acetolactate synthase (ilvY) from Arthrospira platensis (Spirulina platensis).